Consider the following 853-residue polypeptide: Putative dipeptidyl aminopeptidase C14C4.15c (853 aa).

Residues 1–26 (MNAYEGDTLNNHGKSSTRQHWRKRSA) form a disordered region. Topologically, residues 1–65 (MNAYEGDTLN…AKKRRRKKHR (65 aa)) are cytoplasmic. The span at 15-25 (SSTRQHWRKRS) shows a compositional bias: basic residues. Residues 66-86 (YIYLAVCLFFLASVLSCAIIF) traverse the membrane as a helical; Signal-anchor for type II membrane protein segment. Topologically, residues 87–853 (RFYLHTNREN…SGHFHHALYC (767 aa)) are lumenal. N-linked (GlcNAc...) asparagine glycosylation is found at asparagine 96, asparagine 102, asparagine 472, asparagine 483, and asparagine 613. Residues serine 719, aspartate 795, and histidine 828 each act as charge relay system in the active site.

This sequence belongs to the peptidase S9B family.

It localises to the vacuole membrane. This is Putative dipeptidyl aminopeptidase C14C4.15c from Schizosaccharomyces pombe (strain 972 / ATCC 24843) (Fission yeast).